Consider the following 316-residue polypeptide: MQILLANPRGFCAGVDRAISIVENALEIYGAPIYVRHEVVHNRYVVESLRERGAIFIEQISEVPDGTILIFSAHGVSQAVRNEAKSRDLTVFDATCPLVTKVHMEVARASRRGEESILIGHAGHPEVEGTMGQYSNPEGGMYLVESPEDVLTLNVKNDAKLSFMTQTTLSVDDTSDVIDALRKRFPKIVGPRKDDICYATTNRQEAVRALAEQADVVLVVGSKNSSNSNRLAELAQRMGKTAFLIDDATDIQEAWVKDVNCVGVTAGASAPDILVQNVIARLQELGGGDAIPLEGREENIVFEVPKELRIDAREVE.

Cys12 contributes to the [4Fe-4S] cluster binding site. His41 and His74 together coordinate (2E)-4-hydroxy-3-methylbut-2-enyl diphosphate. The dimethylallyl diphosphate site is built by His41 and His74. Positions 41 and 74 each coordinate isopentenyl diphosphate. A [4Fe-4S] cluster-binding site is contributed by Cys96. (2E)-4-hydroxy-3-methylbut-2-enyl diphosphate is bound at residue His124. His124 contributes to the dimethylallyl diphosphate binding site. His124 is a binding site for isopentenyl diphosphate. Glu126 acts as the Proton donor in catalysis. Thr167 serves as a coordination point for (2E)-4-hydroxy-3-methylbut-2-enyl diphosphate. Cys197 is a [4Fe-4S] cluster binding site. Ser225, Ser226, Asn227, and Ser269 together coordinate (2E)-4-hydroxy-3-methylbut-2-enyl diphosphate. Ser225, Ser226, Asn227, and Ser269 together coordinate dimethylallyl diphosphate. 4 residues coordinate isopentenyl diphosphate: Ser225, Ser226, Asn227, and Ser269.

The protein belongs to the IspH family. Homodimer. Requires [4Fe-4S] cluster as cofactor.

It carries out the reaction isopentenyl diphosphate + 2 oxidized [2Fe-2S]-[ferredoxin] + H2O = (2E)-4-hydroxy-3-methylbut-2-enyl diphosphate + 2 reduced [2Fe-2S]-[ferredoxin] + 2 H(+). The enzyme catalyses dimethylallyl diphosphate + 2 oxidized [2Fe-2S]-[ferredoxin] + H2O = (2E)-4-hydroxy-3-methylbut-2-enyl diphosphate + 2 reduced [2Fe-2S]-[ferredoxin] + 2 H(+). It participates in isoprenoid biosynthesis; dimethylallyl diphosphate biosynthesis; dimethylallyl diphosphate from (2E)-4-hydroxy-3-methylbutenyl diphosphate: step 1/1. It functions in the pathway isoprenoid biosynthesis; isopentenyl diphosphate biosynthesis via DXP pathway; isopentenyl diphosphate from 1-deoxy-D-xylulose 5-phosphate: step 6/6. Its function is as follows. Catalyzes the conversion of 1-hydroxy-2-methyl-2-(E)-butenyl 4-diphosphate (HMBPP) into a mixture of isopentenyl diphosphate (IPP) and dimethylallyl diphosphate (DMAPP). Acts in the terminal step of the DOXP/MEP pathway for isoprenoid precursor biosynthesis. This is 4-hydroxy-3-methylbut-2-enyl diphosphate reductase from Enterobacter sp. (strain 638).